The sequence spans 837 residues: Protein translocase subunit SecA (837 aa).

ATP contacts are provided by residues glutamine 85, 103–107, and aspartate 493; that span reads GEGKT. Residues cysteine 821, cysteine 823, cysteine 832, and histidine 833 each contribute to the Zn(2+) site.

This sequence belongs to the SecA family. Monomer and homodimer. Part of the essential Sec protein translocation apparatus which comprises SecA, SecYEG and auxiliary proteins SecDF. Other proteins may also be involved. The cofactor is Zn(2+).

It localises to the cell membrane. The protein resides in the cytoplasm. The catalysed reaction is ATP + H2O + cellular proteinSide 1 = ADP + phosphate + cellular proteinSide 2.. In terms of biological role, part of the Sec protein translocase complex. Interacts with the SecYEG preprotein conducting channel. Has a central role in coupling the hydrolysis of ATP to the transfer of proteins into and across the cell membrane, serving as an ATP-driven molecular motor driving the stepwise translocation of polypeptide chains across the membrane. This is Protein translocase subunit SecA from Streptococcus pneumoniae (strain ATCC BAA-255 / R6).